Reading from the N-terminus, the 180-residue chain is Ribulose bisphosphate carboxylase small subunit, chloroplastic 2 (180 aa).

Residues 1–56 (MASMISSSAVTTVSRASRGQSAAVAPFGGLKSMTGFPVKKVNTDITSITSNGGRVK) constitute a chloroplast transit peptide.

This sequence belongs to the RuBisCO small chain family. As to quaternary structure, heterohexadecamer of 8 large and 8 small subunits.

It is found in the plastid. The protein localises to the chloroplast. Functionally, ruBisCO catalyzes two reactions: the carboxylation of D-ribulose 1,5-bisphosphate, the primary event in carbon dioxide fixation, as well as the oxidative fragmentation of the pentose substrate. Both reactions occur simultaneously and in competition at the same active site. Although the small subunit is not catalytic it is essential for maximal activity. The polypeptide is Ribulose bisphosphate carboxylase small subunit, chloroplastic 2 (Pisum sativum (Garden pea)).